The chain runs to 703 residues: Protein teflon (703 aa).

The segment at 32 to 55 (MLCHFCKDIFTHLPEFMRHLQWSH) adopts a C2H2-type 1 zinc-finger fold. Disordered regions lie at residues 78–111 (SSEDDVQSQANSCSSGDSGLAGEMEDADGEPGSS), 140–161 (EQSYSKNPPDSRTEGFRCARKP), 205–239 (NDVSKPRLNKLRSKLNNSLSSNISGPPKQSKMPSL), and 339–434 (SQQP…SKLE). Residues 84–94 (QSQANSCSSGD) are compositionally biased toward polar residues. Positions 148-161 (PDSRTEGFRCARKP) are enriched in basic and acidic residues. 2 stretches are compositionally biased toward polar residues: residues 339–352 (SQQPSELNTTNNAV) and 364–373 (SLTVISSSPI). 2 consecutive C2H2-type zinc fingers follow at residues 649–672 (YFCECCEEIFPNEARYKKHVQSVH) and 677–700 (FTCSECGKSFKRLYFYDKHLKTVH).

The protein belongs to the Teflon family.

It is found in the nucleus. It localises to the chromosome. Specifically required in males for proper segregation of autosomal bivalents at meiosis I. Expression is required in the male germ line prior to spermatocyte stage S4. May have a role as a bridging molecule maintaining adhesion to hold autosome bivalents together via heterochromatic connections. This is Protein teflon from Drosophila persimilis (Fruit fly).